The following is a 326-amino-acid chain: MRSISCSKEYAEDVRNLNIRPEQLDDFFGQKDLIQNLKVFINAAKTRTEALDHVLLHGPPGLGKTTLAQIISKELRVSFRATSGPLLNKAGDLAAVLTTLNAKDVLFIDEIHRLNRSIEEVLYTAMEDFCLDLLVGEGPSTRTLRIDLPPFTLVGATTRLGLLSAPLRDRFGIPLRLEFYSFEELVDIIKRGTKVFSAEIEEDAIQEIACRARGTPRIALRLLRRIRDFVEVKDNKKITHKIADSALSKLGIDKMGLNKLDVDYLRFLFNTSGSVGIDTISIALSEDSGNIEETVEPYLVKISFVKRTPRGRVLTDQGKEYLSLQY.

The large ATPase domain (RuvB-L) stretch occupies residues 1 to 180 (MRSISCSKEY…FGIPLRLEFY (180 aa)). Residues Ile19, Arg20, Gly61, Lys64, Thr65, Thr66, 127–129 (EDF), Arg170, Tyr180, and Arg217 each bind ATP. Thr65 lines the Mg(2+) pocket. Positions 181–251 (SFEELVDIIK…IADSALSKLG (71 aa)) are small ATPAse domain (RuvB-S). Residues 254–326 (KMGLNKLDVD…QGKEYLSLQY (73 aa)) are head domain (RuvB-H). DNA-binding residues include Arg307 and Arg312.

Belongs to the RuvB family. As to quaternary structure, homohexamer. Forms an RuvA(8)-RuvB(12)-Holliday junction (HJ) complex. HJ DNA is sandwiched between 2 RuvA tetramers; dsDNA enters through RuvA and exits via RuvB. An RuvB hexamer assembles on each DNA strand where it exits the tetramer. Each RuvB hexamer is contacted by two RuvA subunits (via domain III) on 2 adjacent RuvB subunits; this complex drives branch migration. In the full resolvosome a probable DNA-RuvA(4)-RuvB(12)-RuvC(2) complex forms which resolves the HJ.

It localises to the cytoplasm. It catalyses the reaction ATP + H2O = ADP + phosphate + H(+). The RuvA-RuvB-RuvC complex processes Holliday junction (HJ) DNA during genetic recombination and DNA repair, while the RuvA-RuvB complex plays an important role in the rescue of blocked DNA replication forks via replication fork reversal (RFR). RuvA specifically binds to HJ cruciform DNA, conferring on it an open structure. The RuvB hexamer acts as an ATP-dependent pump, pulling dsDNA into and through the RuvAB complex. RuvB forms 2 homohexamers on either side of HJ DNA bound by 1 or 2 RuvA tetramers; 4 subunits per hexamer contact DNA at a time. Coordinated motions by a converter formed by DNA-disengaged RuvB subunits stimulates ATP hydrolysis and nucleotide exchange. Immobilization of the converter enables RuvB to convert the ATP-contained energy into a lever motion, pulling 2 nucleotides of DNA out of the RuvA tetramer per ATP hydrolyzed, thus driving DNA branch migration. The RuvB motors rotate together with the DNA substrate, which together with the progressing nucleotide cycle form the mechanistic basis for DNA recombination by continuous HJ branch migration. Branch migration allows RuvC to scan DNA until it finds its consensus sequence, where it cleaves and resolves cruciform DNA. In Wolbachia sp. subsp. Brugia malayi (strain TRS), this protein is Holliday junction branch migration complex subunit RuvB.